The chain runs to 579 residues: Trehalase (579 aa).

Positions Met-1 to Ala-15 are cleaved as a signal peptide. N-linked (GlcNAc...) asparagine glycosylation is found at Asn-29 and Asn-58. Substrate is bound by residues Arg-161, Trp-168–Asp-169, Asn-205, Arg-214–Gln-216, Arg-279–Glu-281, and Gly-313. The N-linked (GlcNAc...) asparagine glycan is linked to Asn-205. Asp-315 functions as the Proton donor/acceptor in the catalytic mechanism. The N-linked (GlcNAc...) asparagine glycan is linked to Asn-331. Glu-513 functions as the Proton donor/acceptor in the catalytic mechanism. Glu-528 serves as a coordination point for substrate. The span at Asp-560–Asn-569 shows a compositional bias: polar residues. Positions Asp-560–Lys-579 are disordered.

The protein belongs to the glycosyl hydrolase 37 family. As to expression, in midgut and Malpighian tubules.

It localises to the basolateral cell membrane. It catalyses the reaction alpha,alpha-trehalose + H2O = alpha-D-glucose + beta-D-glucose. Functionally, involved in uptake of hemolymph trehalose into epithelial cells in the midgut of feeding larvae. This chain is Trehalase, found in Bombyx mori (Silk moth).